The primary structure comprises 499 residues: Probable malate:quinone oxidoreductase 4 (499 aa).

This sequence belongs to the MQO family. Requires FAD as cofactor.

It carries out the reaction (S)-malate + a quinone = a quinol + oxaloacetate. It functions in the pathway carbohydrate metabolism; tricarboxylic acid cycle; oxaloacetate from (S)-malate (quinone route): step 1/1. This Staphylococcus epidermidis (strain ATCC 12228 / FDA PCI 1200) protein is Probable malate:quinone oxidoreductase 4.